Consider the following 174-residue polypeptide: uncharacterized protein (174 aa).

A signal peptide spans 1-31; the sequence is MCCVYRMNRPASGLTVVFCGKLSGKPGPKSA. The disordered stretch occupies residues 39 to 59; the sequence is KSGADDGGENPRFFSAGPRTE.

This is an uncharacterized protein from Escherichia coli (strain K12).